The chain runs to 275 residues: Bis(5'-nucleosyl)-tetraphosphatase, symmetrical (275 aa).

Belongs to the Ap4A hydrolase family.

The catalysed reaction is P(1),P(4)-bis(5'-adenosyl) tetraphosphate + H2O = 2 ADP + 2 H(+). Functionally, hydrolyzes diadenosine 5',5'''-P1,P4-tetraphosphate to yield ADP. The chain is Bis(5'-nucleosyl)-tetraphosphatase, symmetrical from Marinomonas sp. (strain MWYL1).